The primary structure comprises 507 residues: Probable cyclic di-GMP phosphodiesterase PdeG (507 aa).

2 helical membrane passes run 4 to 24 (TLIP…ILNI) and 217 to 237 (LIDK…AAAF). The 255-residue stretch at 246–500 (SATPEEILRR…DLVKIILSKP (255 aa)) folds into the EAL domain.

It is found in the cell membrane. It carries out the reaction 3',3'-c-di-GMP + H2O = 5'-phosphoguanylyl(3'-&gt;5')guanosine + H(+). Functionally, phosphodiesterase (PDE) that catalyzes the hydrolysis of cyclic-di-GMP (c-di-GMP) to 5'-pGpG. The protein is Probable cyclic di-GMP phosphodiesterase PdeG of Escherichia coli (strain K12).